Reading from the N-terminus, the 347-residue chain is ATP-dependent kinase YFH7 (347 aa).

ATP is bound at residue 33–41 (GPPGSGKST).

The protein belongs to the YFH7 family.

Its function is as follows. ATP-dependent kinase that could be involved in endoplasmic reticulum membrane assembly. The protein is ATP-dependent kinase YFH7 (YFH7) of Lachancea thermotolerans (strain ATCC 56472 / CBS 6340 / NRRL Y-8284) (Yeast).